Consider the following 286-residue polypeptide: MADTYGMNGHNGHVKDRRSSSMNGRNRLYAQQEPQRTTHLSEFGKHMVAASGEFVGTFLFLYFGYAGNIVAVLQEPISGPNGTLANNTVMYIAMAYGFSLLVNVWTFYRISGGLFNPAVTFGLCLSGQLPWIRALFLFPSQIIAAMCAGGLVNAMFPGSASIANTTLGPNTSIAQGVFLEMFFTAQLVFVVLMLAAEKSRDTFLAPVGIGLALFVALIPGVFVTGGSANPVRSFGCAVGSRDFPGYHWIYWVGPLLGAALAAGYFRLVKMMHYEEANPGQDSPVDV.

Residues 1–34 form a disordered region; it reads MADTYGMNGHNGHVKDRRSSSMNGRNRLYAQQEP. At 1–52 the chain is on the cytoplasmic side; the sequence is MADTYGMNGHNGHVKDRRSSSMNGRNRLYAQQEPQRTTHLSEFGKHMVAASG. A helical transmembrane segment spans residues 53-73; the sequence is EFVGTFLFLYFGYAGNIVAVL. Over 74 to 87 the chain is Extracellular; sequence QEPISGPNGTLANN. N-linked (GlcNAc...) asparagine glycosylation is found at asparagine 81 and asparagine 86. The helical transmembrane segment at 88-108 threads the bilayer; it reads TVMYIAMAYGFSLLVNVWTFY. The Cytoplasmic portion of the chain corresponds to 109 to 135; it reads RISGGLFNPAVTFGLCLSGQLPWIRAL. The NPA 1 signature appears at 116-118; sequence NPA. The chain crosses the membrane as a helical span at residues 136-156; it reads FLFPSQIIAAMCAGGLVNAMF. Topologically, residues 157–175 are extracellular; it reads PGSASIANTTLGPNTSIAQ. N-linked (GlcNAc...) asparagine glycans are attached at residues asparagine 164 and asparagine 170. A helical membrane pass occupies residues 176–196; sequence GVFLEMFFTAQLVFVVLMLAA. Residues 197 to 202 are Cytoplasmic-facing; it reads EKSRDT. Residues 203–223 form a helical membrane-spanning segment; sequence FLAPVGIGLALFVALIPGVFV. Topologically, residues 224-244 are extracellular; the sequence is TGGSANPVRSFGCAVGSRDFP. The NPA 2 signature appears at 229–231; it reads NPV. A helical transmembrane segment spans residues 245 to 265; sequence GYHWIYWVGPLLGAALAAGYF. At 266-286 the chain is on the cytoplasmic side; that stretch reads RLVKMMHYEEANPGQDSPVDV.

This sequence belongs to the MIP/aquaporin (TC 1.A.8) family.

The protein resides in the membrane. The catalysed reaction is H2O(in) = H2O(out). Functionally, probable water channel that may have redundant functions with FgAQP5. The sequence is that of Probable aquaporin-3 from Gibberella zeae (strain ATCC MYA-4620 / CBS 123657 / FGSC 9075 / NRRL 31084 / PH-1) (Wheat head blight fungus).